Here is a 99-residue protein sequence, read N- to C-terminus: Small ribosomal subunit protein cS23 (99 aa).

The protein belongs to the chloroplast-specific ribosomal protein cS23 family. Part of the 30S ribosomal subunit.

Its subcellular location is the plastid. It is found in the chloroplast. Probably a ribosomal protein or a ribosome-associated protein. The sequence is that of Small ribosomal subunit protein cS23 from Gracilaria tenuistipitata var. liui (Red alga).